Here is a 495-residue protein sequence, read N- to C-terminus: SH2 domain-containing adapter protein E (495 aa).

Disordered stretches follow at residues 51 to 190 (TVSE…DKGK), 203 to 233 (DYAD…EPYD), and 256 to 327 (LLDS…EYEQ). Position 107 is a phosphoserine (S107). The span at 135-144 (TKSSGCSTYI) shows a compositional bias: polar residues. Residues 148–157 (IKVDTQEKNG) show a composition bias toward basic and acidic residues. The segment covering 162–181 (PSSSSSSSSSSSSASSSPSS) has biased composition (low complexity). 2 stretches are compositionally biased toward basic and acidic residues: residues 208–224 (YDAK…RVGE) and 301–327 (PRAE…EYEQ). Positions 395-490 (WYHGAISRAE…AEHMTLLYPV (96 aa)) constitute an SH2 domain.

The polypeptide is SH2 domain-containing adapter protein E (SHE) (Homo sapiens (Human)).